The chain runs to 338 residues: MSRTSLTRFLIQEQHAGRINADLRQLIAVVARACTSISIAVSKGALGGVLGDAGTGNVQGEAQKKLDVISNEILLEANAWGGHLAACASEEMDHSQPVPDIYPRGDFLLLFDPLDGSSNIDVNVSVGTIFSVLRCPTNVELPGDDAFLQPGSKQIAAGYCIYGPSTQLVLTVGHGTHAFTLDREKGEFVLTTENMQIPAATQEFAINMSNQRHWEAPMQAYVGDLLAGKEGARGKNFNMRWIASMVADVHRILTRGGIFIYPWDKKDPSKAGKLRLMYEANPMGLLVEQAGGAAWTGRERILDIQPDQLHQRVPVFLGSREEVAEAVRYHHAHDDARG.

Positions 90, 112, 114, and 115 each coordinate Mg(2+). Substrate-binding positions include 115–118 (DGSS), asparagine 207, and lysine 273. Position 279 (glutamate 279) interacts with Mg(2+).

Belongs to the FBPase class 1 family. As to quaternary structure, homotetramer. Requires Mg(2+) as cofactor.

It localises to the cytoplasm. The catalysed reaction is beta-D-fructose 1,6-bisphosphate + H2O = beta-D-fructose 6-phosphate + phosphate. It functions in the pathway carbohydrate biosynthesis; gluconeogenesis. The chain is Fructose-1,6-bisphosphatase class 1 from Stenotrophomonas maltophilia (strain R551-3).